A 172-amino-acid polypeptide reads, in one-letter code: Peptidyl-prolyl cis-trans isomerase (172 aa).

Positions 7-170 (FFDMAIAGNP…RPVTIADCGQ (164 aa)) constitute a PPIase cyclophilin-type domain.

The protein belongs to the cyclophilin-type PPIase family. As to expression, expressed in meristematic tissues, with higher levels in nodules.

Its subcellular location is the cytoplasm. The catalysed reaction is [protein]-peptidylproline (omega=180) = [protein]-peptidylproline (omega=0). Its activity is regulated as follows. Binds cyclosporin A (CsA). CsA mediates some of its effects via an inhibitory action on PPIase. Functionally, PPIases accelerate the folding of proteins. It catalyzes the cis-trans isomerization of proline imidic peptide bonds in oligopeptides. This Lupinus luteus (European yellow lupine) protein is Peptidyl-prolyl cis-trans isomerase.